The primary structure comprises 105 residues: Nucleoid-associated protein EAT1b_1710 (105 aa).

The span at 1-16 shows a compositional bias: low complexity; it reads MRGMGNMNNMMKQMQK. Residues 1 to 26 are disordered; that stretch reads MRGMGNMNNMMKQMQKMQKDMAKAQE. Residues 17–26 are compositionally biased toward basic and acidic residues; that stretch reads MQKDMAKAQE.

Belongs to the YbaB/EbfC family. Homodimer.

The protein localises to the cytoplasm. Its subcellular location is the nucleoid. Binds to DNA and alters its conformation. May be involved in regulation of gene expression, nucleoid organization and DNA protection. This chain is Nucleoid-associated protein EAT1b_1710, found in Exiguobacterium sp. (strain ATCC BAA-1283 / AT1b).